The sequence spans 168 residues: UPF0134 protein MPN_524 (168 aa).

It belongs to the UPF0134 family.

The polypeptide is UPF0134 protein MPN_524 (Mycoplasma pneumoniae (strain ATCC 29342 / M129 / Subtype 1) (Mycoplasmoides pneumoniae)).